The primary structure comprises 207 residues: Holliday junction branch migration complex subunit RuvA (207 aa).

Residues 1 to 65 (MYDYIRGILT…ETEHVLYGFS (65 aa)) are domain I. The segment at 66-144 (SRRERECFRM…DLLPLDSKAI (79 aa)) is domain II. Residues 145–155 (ASWESVKPSCM) are flexible linker. Positions 155–207 (MDEGIQALAALGYSKPSAERMIAEAMSELPENASLAEILPIALKKNLQGLNKS) are domain III.

It belongs to the RuvA family. As to quaternary structure, homotetramer. Forms an RuvA(8)-RuvB(12)-Holliday junction (HJ) complex. HJ DNA is sandwiched between 2 RuvA tetramers; dsDNA enters through RuvA and exits via RuvB. An RuvB hexamer assembles on each DNA strand where it exits the tetramer. Each RuvB hexamer is contacted by two RuvA subunits (via domain III) on 2 adjacent RuvB subunits; this complex drives branch migration. In the full resolvosome a probable DNA-RuvA(4)-RuvB(12)-RuvC(2) complex forms which resolves the HJ.

It localises to the cytoplasm. Functionally, the RuvA-RuvB-RuvC complex processes Holliday junction (HJ) DNA during genetic recombination and DNA repair, while the RuvA-RuvB complex plays an important role in the rescue of blocked DNA replication forks via replication fork reversal (RFR). RuvA specifically binds to HJ cruciform DNA, conferring on it an open structure. The RuvB hexamer acts as an ATP-dependent pump, pulling dsDNA into and through the RuvAB complex. HJ branch migration allows RuvC to scan DNA until it finds its consensus sequence, where it cleaves and resolves the cruciform DNA. This is Holliday junction branch migration complex subunit RuvA from Chlamydia caviae (strain ATCC VR-813 / DSM 19441 / 03DC25 / GPIC) (Chlamydophila caviae).